The following is a 495-amino-acid chain: Sialin (495 aa).

A disordered region spans residues 1 to 24 (MKSPVSDLAPSDGEEGSDRTPLLQ). Residue Ser3 is modified to Phosphoserine. The Dileucine internalization motif motif lies at 22 to 23 (LL). The chain crosses the membrane as a helical span at residues 42–62 (LAFLSFFGFFVLYSLRVNLSV). N-linked (GlcNAc...) asparagine glycans are attached at residues Asn71, Asn77, and Asn95. The next 11 helical transmembrane spans lie at 110 to 130 (WILGSFFYGYIITQIPGGYVA), 137 to 157 (LLLGFGIFATAIFTLFTPLAA), 159 to 179 (FGVGALVALRALEGLGEGVTY), 201 to 221 (ISYAGAQLGTVVSLPLSGVIC), 228 to 248 (YVFYFFGIVGIIWFILWICLV), 289 to 309 (LPLWAIVVAHFSYNWTFYTLL), 329 to 349 (FLSAVPYLGCWLCMILSGQAA), 366 to 386 (VFSLIGMIGPAIFLVAAGFIG), 392 to 412 (AVAFLTISTTLGGFCSSGFSI), 424 to 444 (ILLGITNTFATIPGMIGPIIA), and 458 to 478 (TVFCIAAAINVFGAIFFTLFA).

Belongs to the major facilitator superfamily. Sodium/anion cotransporter family. In terms of tissue distribution, significantly expressed in lung endothelial cells, and much less in liver.

Its subcellular location is the basolateral cell membrane. The protein localises to the cytoplasmic vesicle. The protein resides in the secretory vesicle. It is found in the synaptic vesicle membrane. It localises to the lysosome membrane. It catalyses the reaction N-acetylneuraminate(in) + H(+)(in) = N-acetylneuraminate(out) + H(+)(out). The enzyme catalyses D-glucuronate(out) + H(+)(out) = D-glucuronate(in) + H(+)(in). It carries out the reaction 2 nitrate(out) + H(+)(out) = 2 nitrate(in) + H(+)(in). The catalysed reaction is L-aspartate(out) = L-aspartate(in). It catalyses the reaction L-glutamate(out) = L-glutamate(in). The enzyme catalyses N-acetyl-L-aspartyl-L-glutamate(out) = N-acetyl-L-aspartyl-L-glutamate(in). In terms of biological role, multifunctional anion transporter that operates via two distinct transport mechanisms, namely proton-coupled anion cotransport and membrane potential-dependent anion transport. Electroneutral proton-coupled acidic monosaccharide symporter, with a sugar to proton stoichiometry of 1:1. Exports glucuronic acid and free sialic acid derived from sialoglycoconjugate degradation out of lysosomes, driven by outwardly directed lysosomal pH gradient. May regulate lysosome function and metabolism of sialylated conjugates that impact oligodendrocyte lineage differentiation and myelinogenesis in the central nervous system. Electrogenic proton-coupled nitrate symporter that transports nitrate ions across the basolateral membrane of salivary gland acinar cells, with nitrate to proton stoichiometry of 2:1. May contribute to nitrate clearance from serum by salivary glands, where it is further concentrated and secreted in the saliva. Uses membrane potential to drive the uptake of acidic amino acids and peptides into synaptic vesicles. Responsible for synaptic vesicular storage of L-aspartate and L-glutamate in pinealocytes as well as vesicular uptake of N-acetyl-L-aspartyl-L-glutamate neuropeptide, relevant to aspartegic-associated glutamatergic neurotransmission and activation of metabotropic receptors that inhibit subsequent transmitter release. Receptor for CM101, a polysaccharide produced by group B Streptococcus with antipathoangiogenic properties. This Ovis aries (Sheep) protein is Sialin (SLC17A5).